A 246-amino-acid chain; its full sequence is Uridylate kinase (246 aa).

16–19 is an ATP binding site; it reads KFSG. G58 serves as a coordination point for UMP. G59 and R63 together coordinate ATP. Residues D78 and 139–146 contribute to the UMP site; that span reads TGNPFFTT. T166, Y172, and D175 together coordinate ATP.

The protein belongs to the UMP kinase family. Homohexamer.

The protein localises to the cytoplasm. The catalysed reaction is UMP + ATP = UDP + ADP. The protein operates within pyrimidine metabolism; CTP biosynthesis via de novo pathway; UDP from UMP (UMPK route): step 1/1. Its activity is regulated as follows. Inhibited by UTP. Its function is as follows. Catalyzes the reversible phosphorylation of UMP to UDP. In Legionella pneumophila (strain Corby), this protein is Uridylate kinase.